The following is a 1937-amino-acid chain: Collagen-like protein 7 (1937 aa).

N-linked (GlcNAc...) asparagine; by host glycans are attached at residues Asn-6 and Asn-21. Disordered regions lie at residues 88–248 (CKGN…KGDK), 294–531 (NLKG…PDLG), 583–643 (LKGD…NQGV), and 670–1144 (IKGD…DTAT). Collagen-like domains follow at residues 102–161 (GPKG…KGEK), 168–227 (GEKG…KGDI), 297–356 (GEKG…KGEK), 363–422 (GDKG…IGEK), and 453–512 (GDKG…KGDK). Positions 296 to 514 (KGEKGDKGNK…DKGDKGDKGD (219 aa)) are enriched in basic and acidic residues. Asn-515 is a glycosylation site (N-linked (GlcNAc...) asparagine; by host). Composition is skewed to basic and acidic residues over residues 584–605 (KGDKGDKGINGNKGDKGEKGDK), 614–625 (KGEKGDKGDKGD), and 670–899 (IKGD…KGDK). Collagen-like domains lie at 672-731 (GDKG…KGDK), 735-854 (GNKG…KGNI), 867-926 (GLKG…KGDK), 936-995 (GIKG…KGDK), and 1023-1142 (GSKG…KGDT). The N-linked (GlcNAc...) asparagine; by host glycan is linked to Asn-902. Over residues 907–1141 (YKGDKGDKGS…DKGDKGDKGD (235 aa)) the composition is skewed to basic and acidic residues. N-linked (GlcNAc...) asparagine; by host glycosylation is found at Asn-1178, Asn-1192, Asn-1212, Asn-1217, Asn-1245, Asn-1246, Asn-1255, Asn-1317, Asn-1422, Asn-1427, Asn-1432, Asn-1443, Asn-1452, Asn-1477, Asn-1494, Asn-1506, Asn-1513, Asn-1533, Asn-1598, Asn-1619, Asn-1620, Asn-1632, Asn-1641, Asn-1663, Asn-1664, Asn-1672, Asn-1682, Asn-1683, Asn-1732, Asn-1735, Asn-1746, Asn-1756, Asn-1784, Asn-1842, and Asn-1934.

In terms of processing, may be hydroxylated on lysine by the viral-encoded procollagen-lysine,2-oxoglutarate 5-dioxygenase.

The protein localises to the virion. In terms of biological role, may participate in the formation of a layer of cross-linked glycosylated fibrils at the viral surface thus giving it a hairy-like appearance. This is Collagen-like protein 7 from Acanthamoeba polyphaga mimivirus (APMV).